A 653-amino-acid chain; its full sequence is MTIRILPARLANQIAAGEVVERPASVVKELVENSLDAGATRIDIDLEKGGAKLIRIRDNGSGIDKDELGLALSRHATSKIHTLDDLEAIMSLGFRGEALASISSVSRLTLTSRTVAQEEAWSAYSEGRDMAVKLQPAAHPVGTTVEVLDLFFNTPARRKFLRTEKTEFTHIDELLKRIALSRFDVSFTLRHNGKIVRQYRAATTLPQQEKRLAAVCGNPFVQHMLRIELEHQGLKLHGWITTPEGARQQSDLQYCYVNGRMMRDKLINHAIRQSYETSLRVDQFATYVLFIELDPHQVDVNVHPAKHEVRFHQARLVHDFIYQALSSALVQGAQVMAPTINEGAFHLPHCAEEVNPPVVPMIDTTQQERVWQAVQNTPDYPRKAPRDNDRDESDNPQVRERAVSNPWVASPKTASTGKERYGSASVSKKEAAVYQTLMQTPDLSDEEPSTASTIVSSIEAVKANIAIEKLGKAIQVVAGQYLLMSSPQGCVLISLYQAQQLKLRGLLNAQHGALKAQPLLVPLALKLNESEWQVAQRHSSALLQLGIELKSRTNHSIMVMAVPQPLRQQNLQQLLPDLLSYAASCSESQALSHQALADWLTQRIVVEKRDYTLAEAIGLIAELEQLWQGNLPLQDPHFITLVDFSASITALHS.

The tract at residues 375–425 (QNTPDYPRKAPRDNDRDESDNPQVRERAVSNPWVASPKTASTGKERYGSAS) is disordered. Positions 380–389 (YPRKAPRDND) are enriched in basic and acidic residues.

The protein belongs to the DNA mismatch repair MutL/HexB family.

This protein is involved in the repair of mismatches in DNA. It is required for dam-dependent methyl-directed DNA mismatch repair. May act as a 'molecular matchmaker', a protein that promotes the formation of a stable complex between two or more DNA-binding proteins in an ATP-dependent manner without itself being part of a final effector complex. The chain is DNA mismatch repair protein MutL from Vibrio cholerae serotype O1 (strain ATCC 39541 / Classical Ogawa 395 / O395).